We begin with the raw amino-acid sequence, 143 residues long: Ribonuclease H (143 aa).

In terms of domain architecture, RNase H type-1 spans 1-141 (MKHVEIFTDG…VDKLASDAAL (141 aa)). Positions 9, 47, 69, and 133 each coordinate Mg(2+).

This sequence belongs to the RNase H family. In terms of assembly, monomer. It depends on Mg(2+) as a cofactor.

Its subcellular location is the cytoplasm. The enzyme catalyses Endonucleolytic cleavage to 5'-phosphomonoester.. Endonuclease that specifically degrades the RNA of RNA-DNA hybrids. The chain is Ribonuclease H from Novosphingobium aromaticivorans (strain ATCC 700278 / DSM 12444 / CCUG 56034 / CIP 105152 / NBRC 16084 / F199).